The sequence spans 141 residues: MSEDSEVVLQLPSAPVGAGGESLPELSPETATPEPPSSAAVSPGTEEPPGDTKKKIDILLKAVGDTPIMKTKKWAVERTRTIQGLIDFIKKFLKLVASEQLFIYVNQSFAPSPDQEVGTLYECFGSDGKLVLHYCKSQAWG.

The interval 1–53 (MSEDSEVVLQLPSAPVGAGGESLPELSPETATPEPPSSAAVSPGTEEPPGDTK) is disordered. Positions 23–40 (LPELSPETATPEPPSSAA) are enriched in low complexity. G141 participates in a covalent cross-link: Glycyl lysine isopeptide (Gly-Lys) (interchain with K-? in acceptor protein).

Belongs to the ATG12 family. As to quaternary structure, forms a conjugate with ATG5. Part of the minor complex composed of 4 sets of ATG12-ATG5 and ATG16L1 (400 kDa); this complex interacts with ATG3 leading to disruption of ATG7 interaction and promotion of ATG8-like proteins lipidation. Forms an 800-kDa complex composed of ATG12-ATG5 and ATG16L2. Interacts with DHX58/RIG-1, IFIH1/MDA5 and MAVS/IPS-1 in monomeric form as well as in ATG12-ATG5 conjugate. The interaction with MAVS is further enhanced upon vesicular stomatitis virus (VSV) infection. Interacts with ATG3; this interaction is essential for phosphatidylethanolamine (PE)-conjugated ATG8-like proteins formation. Interacts with ATG7. Interacts with ATG10. The ATG12-ATG5 conjugate interacts with RAB33A; this interaction is bridged by ATG16L1 and promotes ATG12-ATG5-ATG16L1 complex recruitment to phagophores. Interacts with TECPR1. Interacts with SH3BGRL. The ATG12-ATG5 conjugate interacts with PDCD6IP (via the BRO1 domain); this interaction is bridged by ATG12 and promotes multiple PDCD6IP-mediated functions such as endolysosomal trafficking, macroautophagy and exosome biogenesis. In terms of processing, acetylated by EP300. In terms of tissue distribution, ubiquitous.

The protein resides in the cytoplasm. Its subcellular location is the preautophagosomal structure membrane. Functionally, ubiquitin-like protein involved in autophagy vesicles formation. Conjugation with ATG5 through a ubiquitin-like conjugating system involving also ATG7 as an E1-like activating enzyme and ATG10 as an E2-like conjugating enzyme, is essential for its function. The ATG12-ATG5 conjugate acts as an E3-like enzyme which is required for lipidation of ATG8 family proteins and their association to the vesicle membranes. As part of the ATG8 conjugation system with ATG5 and ATG16L1, required for recruitment of LRRK2 to stressed lysosomes and induction of LRRK2 kinase activity in response to lysosomal stress. (Microbial infection) May act as a proviral factor. In association with ATG5, negatively regulates the innate antiviral immune response by impairing the type I IFN production pathway upon vesicular stomatitis virus (VSV) infection. The protein is Ubiquitin-like protein ATG12 of Mus musculus (Mouse).